A 572-amino-acid polypeptide reads, in one-letter code: Glutathione hydrolase 5 proenzyme (572 aa).

Over 1–6 (MAWGHR) the chain is Cytoplasmic. The helical; Signal-anchor for type II membrane protein transmembrane segment at 7 to 29 (TTVCLVLLGVSLGLAIIVLAVVL) threads the bilayer. Residues 30–572 (PHHQASCRPD…LRKAGKASGY (543 aa)) are Extracellular-facing. N-linked (GlcNAc...) asparagine glycosylation is present at N98. Residue R110 participates in L-glutamate binding. N185, N194, N204, N277, N303, N347, and N377 each carry an N-linked (GlcNAc...) asparagine glycan. T388 (nucleophile) is an active-site residue. L-glutamate-binding positions include T406, E427, and 453 to 454 (SS).

This sequence belongs to the gamma-glutamyltransferase family. In terms of assembly, heterodimer composed of the light and heavy chains. The active site is located in the light chain. Cleaved by autocatalysis into a large and a small subunit. In terms of processing, glycosylated. Widely expressed, but at low level, except in the airway epithelial cells. Detected in brain, heart, kidney, liver, lung, spleen, testis and trachea.

The protein resides in the membrane. It catalyses the reaction glutathione + H2O = L-cysteinylglycine + L-glutamate. The catalysed reaction is an S-substituted glutathione + H2O = an S-substituted L-cysteinylglycine + L-glutamate. The enzyme catalyses leukotriene C4 + H2O = leukotriene D4 + L-glutamate. It carries out the reaction S-[(2E,6E,10E)-geranylgeranyl]-L-glutathione + H2O = S-[(2E,6E,10E)-geranylgeranyl]-L-cysteinylglycine + L-glutamate. It catalyses the reaction an N-terminal (5-L-glutamyl)-[peptide] + an alpha-amino acid = 5-L-glutamyl amino acid + an N-terminal L-alpha-aminoacyl-[peptide]. Its pathway is lipid metabolism; leukotriene D4 biosynthesis. It participates in sulfur metabolism; glutathione metabolism. With respect to regulation, inhibited by serine-borate. Functionally, cleaves the gamma-glutamyl bond of extracellular glutathione tripeptide (gamma-Glu-Cys-Gly) and certain glutathione conjugates. Hydrolyzes glutathione releasing L-Glu and Cys-Gly dipeptide which is further metabolized to maintain extracellular cysteine levels but also to provide cysteine necessary for intracellular glutathione synthesis. Among glutathione-S-conjugates metabolizes leukotriene C4 (LTC4) and S-geranylgeranyl-glutathione (GGG), but is inactive toward gamma-glutamyl leucine. Converts extracellular LTC4 to LTD4 during acute inflammatory response. Acts as a negative regulator of GGG bioactivity. GGT5 (via GGG catabolism) and ABCC1 (via extracellular transport) establish GGG gradients within lymphoid tissues to position P2RY8-positive lymphocytes at germinal centers in lymphoid follicles and restrict their chemotactic transmigration from blood vessels to bone marrow parenchyma. The transpeptidation reaction, i.e. the transfer of gamma-glutamyl moiety to an acceptor molecule to yield a new gamma-glutamyl compound requires high concentration of dipeptide acceptor and is considered nonphysiological. The chain is Glutathione hydrolase 5 proenzyme (Ggt5) from Rattus norvegicus (Rat).